Reading from the N-terminus, the 179-residue chain is Adenine phosphoribosyltransferase (179 aa).

Belongs to the purine/pyrimidine phosphoribosyltransferase family. Homodimer.

It is found in the cytoplasm. It carries out the reaction AMP + diphosphate = 5-phospho-alpha-D-ribose 1-diphosphate + adenine. It functions in the pathway purine metabolism; AMP biosynthesis via salvage pathway; AMP from adenine: step 1/1. Functionally, catalyzes a salvage reaction resulting in the formation of AMP, that is energically less costly than de novo synthesis. This Mycolicibacterium gilvum (strain PYR-GCK) (Mycobacterium gilvum (strain PYR-GCK)) protein is Adenine phosphoribosyltransferase.